The primary structure comprises 291 residues: Co-chaperone protein DjlA (291 aa).

The Periplasmic portion of the chain corresponds to 1–6; it reads MRYWGK. The chain crosses the membrane as a helical span at residues 7 to 31; sequence LLGLALGIVSSTGIWGMIMGLLMGH. The Cytoplasmic portion of the chain corresponds to 32-291; that stretch reads WIDRARASRR…ELLKSANQTK (260 aa). The tract at residues 177 to 223 is disordered; sequence ESPTGQQSRQNQSRQNGKSQQRRNNGYSNGHSYGGQRPPSPLRGPTV. Residues 181 to 211 show a composition bias toward low complexity; sequence GQQSRQNQSRQNGKSQQRRNNGYSNGHSYGG. The region spanning 225–291 is the J domain; it reads SACRTLGVRS…ELLKSANQTK (67 aa).

In terms of assembly, homodimer.

The protein localises to the cell inner membrane. In terms of biological role, regulatory DnaK co-chaperone. Direct interaction between DnaK and DjlA is needed for the induction of the wcaABCDE operon, involved in the synthesis of a colanic acid polysaccharide capsule, possibly through activation of the RcsB/RcsC phosphotransfer signaling pathway. The colanic acid capsule may help the bacterium survive conditions outside the host. This chain is Co-chaperone protein DjlA, found in Pectobacterium atrosepticum (strain SCRI 1043 / ATCC BAA-672) (Erwinia carotovora subsp. atroseptica).